Consider the following 51-residue polypeptide: Otoconin-90 (51 aa).

This sequence belongs to the phospholipase A2 family. Interacts with OTOL1.

The protein resides in the secreted. Major protein of the otoconia, a calcium carbonate structure in the saccule and utricle of the ear. Together with OTOL1, acts as a scaffold for otoconia biomineralization: sequesters calcium and forms interconnecting fibrils between otoconia that are incorporated into the calcium crystal structure. Together with OTOL1, modulates calcite crystal morphology and growth kinetics. It is unlikely that this protein has phospholipase A2 activity. The sequence is that of Otoconin-90 (OC90) from Cavia porcellus (Guinea pig).